The primary structure comprises 386 residues: Queuine tRNA-ribosyltransferase (386 aa).

Residue aspartate 102 is the Proton acceptor of the active site. Substrate-binding positions include 102–106 (DSGGY), aspartate 156, glutamine 203, and glycine 230. The RNA binding stretch occupies residues 261–267 (GVGKPDD). Aspartate 280 serves as the catalytic Nucleophile. Positions 285–289 (TRSGR) are RNA binding; important for wobble base 34 recognition. Residues cysteine 318, cysteine 320, cysteine 323, and histidine 349 each contribute to the Zn(2+) site.

It belongs to the queuine tRNA-ribosyltransferase family. As to quaternary structure, homodimer. Within each dimer, one monomer is responsible for RNA recognition and catalysis, while the other monomer binds to the replacement base PreQ1. It depends on Zn(2+) as a cofactor.

It catalyses the reaction 7-aminomethyl-7-carbaguanine + guanosine(34) in tRNA = 7-aminomethyl-7-carbaguanosine(34) in tRNA + guanine. It participates in tRNA modification; tRNA-queuosine biosynthesis. Functionally, catalyzes the base-exchange of a guanine (G) residue with the queuine precursor 7-aminomethyl-7-deazaguanine (PreQ1) at position 34 (anticodon wobble position) in tRNAs with GU(N) anticodons (tRNA-Asp, -Asn, -His and -Tyr). Catalysis occurs through a double-displacement mechanism. The nucleophile active site attacks the C1' of nucleotide 34 to detach the guanine base from the RNA, forming a covalent enzyme-RNA intermediate. The proton acceptor active site deprotonates the incoming PreQ1, allowing a nucleophilic attack on the C1' of the ribose to form the product. After dissociation, two additional enzymatic reactions on the tRNA convert PreQ1 to queuine (Q), resulting in the hypermodified nucleoside queuosine (7-(((4,5-cis-dihydroxy-2-cyclopenten-1-yl)amino)methyl)-7-deazaguanosine). This is Queuine tRNA-ribosyltransferase from Zymomonas mobilis subsp. mobilis (strain ATCC 31821 / ZM4 / CP4).